Reading from the N-terminus, the 107-residue chain is Nucleoid-associated protein GOX0603 (107 aa).

Belongs to the YbaB/EbfC family. In terms of assembly, homodimer.

The protein localises to the cytoplasm. Its subcellular location is the nucleoid. Binds to DNA and alters its conformation. May be involved in regulation of gene expression, nucleoid organization and DNA protection. The protein is Nucleoid-associated protein GOX0603 of Gluconobacter oxydans (strain 621H) (Gluconobacter suboxydans).